Reading from the N-terminus, the 354-residue chain is Ferrochelatase (354 aa).

Fe cation is bound by residues histidine 204 and glutamate 306.

Belongs to the ferrochelatase family.

The protein resides in the cytoplasm. It carries out the reaction heme b + 2 H(+) = protoporphyrin IX + Fe(2+). It functions in the pathway porphyrin-containing compound metabolism; protoheme biosynthesis; protoheme from protoporphyrin-IX: step 1/1. Functionally, catalyzes the ferrous insertion into protoporphyrin IX. In Coxiella burnetii (strain CbuG_Q212) (Coxiella burnetii (strain Q212)), this protein is Ferrochelatase.